A 371-amino-acid chain; its full sequence is Nicotinate-nucleotide pyrophosphorylase [carboxylating], chloroplastic (371 aa).

Residues 1–48 constitute a chloroplast transit peptide; the sequence is MPAAAAAAAPPNPNVLQLAPRLRGLVSFPSSYSSSSPFSNRLRLRLPR. Substrate is bound by residues arginine 162, 193–195, arginine 217, lysine 227, glutamate 260, aspartate 287, 319–321, and 340–342; these read TRK, SGN, and SGA.

Belongs to the NadC/ModD family.

The protein resides in the plastid. The protein localises to the chloroplast. It catalyses the reaction nicotinate beta-D-ribonucleotide + CO2 + diphosphate = quinolinate + 5-phospho-alpha-D-ribose 1-diphosphate + 2 H(+). Its pathway is cofactor biosynthesis; NAD(+) biosynthesis; nicotinate D-ribonucleotide from quinolinate: step 1/1. In terms of biological role, involved in the catabolism of quinolinic acid (QA). The protein is Nicotinate-nucleotide pyrophosphorylase [carboxylating], chloroplastic of Oryza sativa subsp. japonica (Rice).